Here is a 579-residue protein sequence, read N- to C-terminus: MKKLFLFFTLIFTAFAANSGLFDKKQTFLKVDDAFAFSATLSTDKSQLQAHWDITDGYYLYQDKISAELVGKSNPLSLHTQQAAELHQDPYFGEVKVFTHSIDGIFRGTFNNADDKVEITYQGCTEGFCYPPETKVLRIGDLAISQEQIVEKTVEKNTALLSEQDRLADGLFHSKWTIFGFFLLGLGLAFTPCVLPMLPLLSAIVIGQQQRPNMMRAFSLAFLYVQGMALTYTLLGLAVAAIGLPFQIALQHPYVMIGLSILFVVLALSMFGLFTIQLPNSLQNKLNTWSQKQTSGAFGGAFAMGMIAGLVASPCTSAPLSGALLYVAQSGDLFTGAATLYLLALGMGVPLMLITLFGNKILPKSGEWMNTVKQTFGFVMLALPVFLLSRILPEVWEPRLWAGLATVFFIWFALQMSKNGFGYAIKIISFVLAMVTVQPLQNWIWQTQTTTQSAVENKSVSQVKFKQIKNTEELDRTLAENPHSIAMLDLYADWCVACKEFEKLTFSDPQVQQQFQNILLLQVNMTKNSPENKALMERFNVMGLPTILFFDQQNNEIKGSRVTGFMDADAFSNWLKALH.

A signal peptide spans 1-16 (MKKLFLFFTLIFTAFA). Intrachain disulfides connect C124/C129 and C193/C315. Helical transmembrane passes span 178 to 198 (IFGF…LPML), 230 to 250 (LTYT…QIAL), 254 to 274 (YVMI…FGLF), 296 to 316 (GAFG…SPCT), 337 to 357 (AATL…ITLF), 376 to 396 (FGFV…PEVW), 397 to 417 (EPRL…LQMS), and 420 to 440 (GFGY…VQPL). The region spanning 449 to 579 (TTTQSAVENK…AFSNWLKALH (131 aa)) is the Thioredoxin domain. An intrachain disulfide couples C495 to C498.

It belongs to the thioredoxin family. DsbD subfamily.

The protein resides in the cell inner membrane. It catalyses the reaction [protein]-dithiol + NAD(+) = [protein]-disulfide + NADH + H(+). It carries out the reaction [protein]-dithiol + NADP(+) = [protein]-disulfide + NADPH + H(+). In terms of biological role, required to facilitate the formation of correct disulfide bonds in some periplasmic proteins and for the assembly of the periplasmic c-type cytochromes. Acts by transferring electrons from cytoplasmic thioredoxin to the periplasm. This transfer involves a cascade of disulfide bond formation and reduction steps. The chain is Thiol:disulfide interchange protein DsbD from Haemophilus influenzae (strain PittEE).